Here is a 306-residue protein sequence, read N- to C-terminus: Lymphotoxin-beta (306 aa).

Residues 1-27 (MGTRGLQGLGGRPQGRGCLLLAVAGAT) lie on the Cytoplasmic side of the membrane. Residues 28–48 (SLVTLLLAVPITVLAVLALVP) traverse the membrane as a helical; Signal-anchor for type II membrane protein segment. The Extracellular portion of the chain corresponds to 49–306 (QDQGRRVEKI…KTFFGAVMVG (258 aa)). 2 disordered regions span residues 63 to 112 (AQAQ…GPVA) and 127 to 151 (PAAD…DLNP). A compositionally biased stretch (low complexity) spans 74 to 85 (PSCILPSPSSLS). The segment covering 95-112 (QRSNASRNLASTSQGPVA) has biased composition (polar residues). N98 is a glycosylation site (N-linked (GlcNAc...) asparagine). The THD domain occupies 154–305 (PAAHLIGAWM…GKTFFGAVMV (152 aa)). A glycan (N-linked (GlcNAc...) asparagine) is linked at N284.

This sequence belongs to the tumor necrosis factor family. As to quaternary structure, heterotrimer of either two LTB and one LTA subunits or (less prevalent) two LTA and one LTB subunits.

The protein localises to the membrane. In terms of biological role, cytokine that binds to LTBR/TNFRSF3. May play a specific role in immune response regulation. Provides the membrane anchor for the attachment of the heterotrimeric complex to the cell surface. This chain is Lymphotoxin-beta (Ltb), found in Mus musculus (Mouse).